A 410-amino-acid chain; its full sequence is Probable 2,3-bisphosphoglycerate-independent phosphoglycerate mutase (410 aa).

The protein belongs to the BPG-independent phosphoglycerate mutase family. A-PGAM subfamily.

The enzyme catalyses (2R)-2-phosphoglycerate = (2R)-3-phosphoglycerate. The protein operates within carbohydrate degradation; glycolysis; pyruvate from D-glyceraldehyde 3-phosphate: step 3/5. In terms of biological role, catalyzes the interconversion of 2-phosphoglycerate and 3-phosphoglycerate. The polypeptide is Probable 2,3-bisphosphoglycerate-independent phosphoglycerate mutase (Deinococcus radiodurans (strain ATCC 13939 / DSM 20539 / JCM 16871 / CCUG 27074 / LMG 4051 / NBRC 15346 / NCIMB 9279 / VKM B-1422 / R1)).